Consider the following 625-residue polypeptide: Putative surface protein bspA-like (625 aa).

Residues 1-548 (MMTPGKSSKT…KAIKGGEIAG (548 aa)) are Extracellular-facing. Residue Asn-15 is glycosylated (N-linked (GlcNAc...) asparagine). 13 LRR repeats span residues 38–60 (CSSF…AFTG), 61–83 (CSSL…AFSE), 85–106 (SSIT…AFSG), 107–129 (CSKL…AFRG), 153–175 (CSSL…AFYG), 176–198 (CSSL…AFQE), 200–221 (SKLT…AFKR), 222–245 (CSSL…FYEC), 247–267 (KLTS…AFSK), 271–293 (LTSI…VFLN), 325–347 (IPKS…TLTH), 348–368 (FTNL…PESF), and 369–392 (IEGD…AFKD). A glycan (N-linked (GlcNAc...) asparagine) is linked at Asn-227. Positions 439-538 (KQSEENPNQP…TDDPSKSKEN (100 aa)) are disordered. Positions 443 to 526 (ENPNQPGENP…QPGENPSQPG (84 aa)) are enriched in low complexity. A helical transmembrane segment spans residues 549 to 571 (IIIGSLIGICLVVAICFGVYYYF). Residues 572–625 (MRIKPKNKNDDNEGNQEDTIANGTNEVTNENVLATFDEQPNNESDSNGLDSAEV) are Cytoplasmic-facing. The interval 577-625 (KNKNDDNEGNQEDTIANGTNEVTNENVLATFDEQPNNESDSNGLDSAEV) is disordered. A compositionally biased stretch (polar residues) spans 588 to 625 (EDTIANGTNEVTNENVLATFDEQPNNESDSNGLDSAEV).

It is found in the cell membrane. In terms of biological role, may bind host tissue. The polypeptide is Putative surface protein bspA-like (BSPAL1) (Trichomonas vaginalis).